The primary structure comprises 145 residues: UPF0763 protein WS1752 (145 aa).

This sequence belongs to the UPF0763 family.

The sequence is that of UPF0763 protein WS1752 from Wolinella succinogenes (strain ATCC 29543 / DSM 1740 / CCUG 13145 / JCM 31913 / LMG 7466 / NCTC 11488 / FDC 602W) (Vibrio succinogenes).